We begin with the raw amino-acid sequence, 132 residues long: Large ribosomal subunit protein uL22c (132 aa).

This sequence belongs to the universal ribosomal protein uL22 family. As to quaternary structure, part of the 50S ribosomal subunit.

The protein resides in the plastid. Its subcellular location is the chloroplast. This protein binds specifically to 23S rRNA. Its function is as follows. The globular domain of the protein is located near the polypeptide exit tunnel on the outside of the subunit, while an extended beta-hairpin is found that lines the wall of the exit tunnel in the center of the 70S ribosome. The protein is Large ribosomal subunit protein uL22c (rpl22) of Populus alba (White poplar).